We begin with the raw amino-acid sequence, 268 residues long: MNAEGGNLHREFEITWGDGRARIHNNGGLLTLSLDRASGSGFRSKNEYLFGRIEIQIKLVAGNSAGTVATYYLSSEGPTHDEIDFEFLGNSSGEPYTLHTNVFSQGKGNREQQFFLWFDPTMDFHTYTILWNPQRIIFYVDETPIREFKNLERHGIPFPRSQAMRVYSSMWNADDWATRGGLVKTDWTKAPFTASYRSYKADACVWSGEASSCGSQDSNPSDKWWMTEELNATRMKRLRWVQKKYMVYNYCVDKMRFPEGLAPECNIS.

The 196-residue stretch at 1–196 (MNAEGGNLHR…WTKAPFTASY (196 aa)) folds into the GH16 domain. Residue glutamate 82 is the Nucleophile of the active site. The active-site Proton donor is glutamate 86. Glutamate 86 lines the xyloglucan pocket. Asparagine 90 is a glycosylation site (N-linked (GlcNAc...) asparagine). Residues 99-101 (HTN), 109-111 (NRE), 175-176 (DW), and glycine 180 contribute to the xyloglucan site. Intrachain disulfides connect cysteine 204–cysteine 213 and cysteine 251–cysteine 265. Residue arginine 256 coordinates xyloglucan.

This sequence belongs to the glycosyl hydrolase 16 family. XTH group 2 subfamily. Post-translationally, contains at least one intrachain disulfide bond essential for its enzymatic activity. As to expression, expressed at a very high level in flowers and stems (picked at anthesis), and at a lower level in ripe leaves and fruits.

It localises to the cytoplasm. It carries out the reaction breaks a beta-(1-&gt;4) bond in the backbone of a xyloglucan and transfers the xyloglucanyl segment on to O-4 of the non-reducing terminal glucose residue of an acceptor, which can be a xyloglucan or an oligosaccharide of xyloglucan.. In terms of biological role, catalyzes xyloglucan endotransglycosylation (XET). Cleaves and religates xyloglucan polymers. Does not catalyze xyloglucan endohydrolysis (XEH). Probably involved in cell wall assembly and synthesis in fast growing tissues and in the maintenance of firmness in mature fruits. The chain is Xyloglucan endotransglucosylase protein 7 from Diospyros kaki (Kaki persimmon).